A 591-amino-acid chain; its full sequence is L-fucose isomerase (591 aa).

Catalysis depends on proton acceptor residues glutamate 337 and aspartate 361. Residues glutamate 337, aspartate 361, and histidine 528 each coordinate Mn(2+).

This sequence belongs to the L-fucose isomerase family. As to quaternary structure, homohexamer. Mn(2+) is required as a cofactor.

Its subcellular location is the cytoplasm. It carries out the reaction L-fucose = L-fuculose. Its pathway is carbohydrate degradation; L-fucose degradation; L-lactaldehyde and glycerone phosphate from L-fucose: step 1/3. In terms of biological role, converts the aldose L-fucose into the corresponding ketose L-fuculose. The polypeptide is L-fucose isomerase (Escherichia coli (strain SE11)).